Here is a 335-residue protein sequence, read N- to C-terminus: tRNA N6-adenosine threonylcarbamoyltransferase (335 aa).

Residues His109, His113, and Tyr130 each contribute to the a divalent metal cation site. Residues 130-134, Asp162, Gly177, Glu181, and Asn266 contribute to the substrate site; that span reads YVSGG. A divalent metal cation is bound at residue Asp294.

The protein belongs to the KAE1 / TsaD family. As to quaternary structure, component of the EKC/KEOPS complex composed of at least GON7, TP53RK, TPRKB, OSGEP and LAGE3; the whole complex dimerizes. The cofactor is a divalent metal cation. As to expression, widely expressed at low level. Expressed at intermediate level in lung. Weakly expressed in testis, skeletal muscle, kidney, liver, spleen, brain and heart.

The protein resides in the cytoplasm. Its subcellular location is the nucleus. It catalyses the reaction L-threonylcarbamoyladenylate + adenosine(37) in tRNA = N(6)-L-threonylcarbamoyladenosine(37) in tRNA + AMP + H(+). Component of the EKC/KEOPS complex that is required for the formation of a threonylcarbamoyl group on adenosine at position 37 (t(6)A37) in tRNAs that read codons beginning with adenine. The complex is probably involved in the transfer of the threonylcarbamoyl moiety of threonylcarbamoyl-AMP (TC-AMP) to the N6 group of A37. OSGEP likely plays a direct catalytic role in this reaction, but requires other protein(s) of the complex to fulfill this activity. This chain is tRNA N6-adenosine threonylcarbamoyltransferase (Osgep), found in Mus musculus (Mouse).